Reading from the N-terminus, the 178-residue chain is Glutamyl-tRNA(Gln) amidotransferase subunit C, mitochondrial (178 aa).

The transit peptide at 1–31 (MFRHIFTLGPRSISAITVRSRRALSSTAKPV) directs the protein to the mitochondrion. Residues 26-67 (STAKPVSAPVTSDDRPNLDVKHLKHPTKVPQQPHKSDIDRRQ) are disordered. Positions 37–46 (SDDRPNLDVK) are enriched in basic and acidic residues.

Belongs to the GatC family. In terms of assembly, subunit of the heterotrimeric GatCAB amidotransferase (AdT) complex, composed of A, B and C subunits.

It is found in the mitochondrion. The catalysed reaction is L-glutamyl-tRNA(Gln) + L-glutamine + ATP + H2O = L-glutaminyl-tRNA(Gln) + L-glutamate + ADP + phosphate + H(+). In terms of biological role, allows the formation of correctly charged Gln-tRNA(Gln) through the transamidation of misacylated Glu-tRNA(Gln) in the mitochondria. The reaction takes place in the presence of glutamine and ATP through an activated gamma-phospho-Glu-tRNA(Gln). The protein is Glutamyl-tRNA(Gln) amidotransferase subunit C, mitochondrial of Aedes aegypti (Yellowfever mosquito).